We begin with the raw amino-acid sequence, 201 residues long: LexA repressor (201 aa).

Positions 28–48 (MRDIAAHLRISGTLGVSKHLT) form a DNA-binding region, H-T-H motif. Residues Ser120 and Lys157 each act as for autocatalytic cleavage activity in the active site.

It belongs to the peptidase S24 family. As to quaternary structure, homodimer.

It catalyses the reaction Hydrolysis of Ala-|-Gly bond in repressor LexA.. Functionally, represses a number of genes involved in the response to DNA damage (SOS response), including recA and lexA. In the presence of single-stranded DNA, RecA interacts with LexA causing an autocatalytic cleavage which disrupts the DNA-binding part of LexA, leading to derepression of the SOS regulon and eventually DNA repair. This Geobacter metallireducens (strain ATCC 53774 / DSM 7210 / GS-15) protein is LexA repressor.